Consider the following 135-residue polypeptide: Small ribosomal subunit protein bS16m/bS16c (135 aa).

The transit peptide at 1–7 (MVVRIRL) directs the protein to the chloroplast and mitochondrion. Positions 87–135 (PMVAMGRKGGARDTRPVDPMTGRYVDAENKTVNANDNQPKEEDTEAKSA) are disordered. Residues 124 to 135 (QPKEEDTEAKSA) are compositionally biased toward basic and acidic residues.

Belongs to the bacterial ribosomal protein bS16 family. As to quaternary structure, component of the mitochondrial ribosome small subunit. In terms of tissue distribution, expressed at low levels in flowers, and, to a lower extent, in leaves, stems and roots.

The protein localises to the mitochondrion. Its subcellular location is the plastid. The protein resides in the chloroplast. This chain is Small ribosomal subunit protein bS16m/bS16c, found in Arabidopsis thaliana (Mouse-ear cress).